Reading from the N-terminus, the 74-residue chain is Protein krueppel (74 aa).

4 consecutive C2H2-type zinc fingers follow at residues 1–4, 10–32, 38–60, and 66–74; these read ERTH, FECQ…MRLH, YRCE…LRVH, and YGCEHCSMK.

This sequence belongs to the krueppel C2H2-type zinc-finger protein family.

It is found in the nucleus. Its function is as follows. Krueppel is a gap class segmentation protein. The sequence is that of Protein krueppel (Kr) from Tribolium castaneum (Red flour beetle).